The sequence spans 176 residues: B9 domain-containing protein 2 (176 aa).

Residues Ala2 to Thr118 enclose the C2 B9-type domain.

The protein belongs to the B9D family. In terms of assembly, part of the tectonic-like complex (also named B9 complex).

The protein resides in the cytoplasm. It localises to the cytoskeleton. The protein localises to the cilium basal body. Its subcellular location is the cilium axoneme. Component of the tectonic-like complex, a complex localized at the transition zone of primary cilia and acting as a barrier that prevents diffusion of transmembrane proteins between the cilia and plasma membranes. This Xenopus laevis (African clawed frog) protein is B9 domain-containing protein 2 (b9d2).